The primary structure comprises 363 residues: Phosphoserine aminotransferase (363 aa).

Serine 9 and arginine 42 together coordinate L-glutamate. Residues 76 to 77, tryptophan 102, threonine 154, aspartate 174, and glutamine 197 each bind pyridoxal 5'-phosphate; that span reads AR. Position 198 is an N6-(pyridoxal phosphate)lysine (lysine 198). A pyridoxal 5'-phosphate-binding site is contributed by 240 to 241; that stretch reads NT.

It belongs to the class-V pyridoxal-phosphate-dependent aminotransferase family. SerC subfamily. As to quaternary structure, homodimer. Requires pyridoxal 5'-phosphate as cofactor.

Its subcellular location is the cytoplasm. It carries out the reaction O-phospho-L-serine + 2-oxoglutarate = 3-phosphooxypyruvate + L-glutamate. The enzyme catalyses 4-(phosphooxy)-L-threonine + 2-oxoglutarate = (R)-3-hydroxy-2-oxo-4-phosphooxybutanoate + L-glutamate. It functions in the pathway amino-acid biosynthesis; L-serine biosynthesis; L-serine from 3-phospho-D-glycerate: step 2/3. The protein operates within cofactor biosynthesis; pyridoxine 5'-phosphate biosynthesis; pyridoxine 5'-phosphate from D-erythrose 4-phosphate: step 3/5. Catalyzes the reversible conversion of 3-phosphohydroxypyruvate to phosphoserine and of 3-hydroxy-2-oxo-4-phosphonooxybutanoate to phosphohydroxythreonine. This chain is Phosphoserine aminotransferase, found in Baumannia cicadellinicola subsp. Homalodisca coagulata.